Consider the following 783-residue polypeptide: ATP-dependent zinc metalloprotease FtsH (783 aa).

Residues 1–16 are compositionally biased toward low complexity; sequence MSETPNTNEQNNPNNQ. The segment at 1 to 79 is disordered; it reads MSETPNTNEQ…DKEEDFASRL (79 aa). The Cytoplasmic portion of the chain corresponds to 1–86; that stretch reads MSETPNTNEQ…SRLNTRPPQR (86 aa). The segment covering 35-61 has biased composition (basic and acidic residues); that stretch reads MPERPERHNQADGAPKRPGDDDRKSER. The chain crosses the membrane as a helical span at residues 87 to 107; sequence ASIITIIIIFLVAFFIGSQMM. Topologically, residues 108 to 233 are extracellular; it reads NMVHGEETDD…EYQVTLPSNV (126 aa). Residues 234 to 254 traverse the membrane as a helical segment; it reads TEILISVLPMLLFAGLLIYFF. Over 255–783 the chain is Cytoplasmic; it reads SQMSKANNSQ…APQPPAAPQQ (529 aa). Residue 325–332 coordinates ATP; sequence GPPGTGKT. His-547 contacts Zn(2+). Glu-548 is a catalytic residue. Positions 551 and 623 each coordinate Zn(2+). Positions 738 to 771 are enriched in low complexity; that stretch reads EAAAKAADQAEQPQVEAEPVAQVATPAAPVAPAV. The tract at residues 738 to 783 is disordered; the sequence is EAAAKAADQAEQPQVEAEPVAQVATPAAPVAPAVPEAPQPPAAPQQ. Over residues 772-783 the composition is skewed to pro residues; it reads PEAPQPPAAPQQ.

This sequence in the central section; belongs to the AAA ATPase family. The protein in the C-terminal section; belongs to the peptidase M41 family. Homohexamer. Requires Zn(2+) as cofactor.

The protein resides in the cell membrane. Acts as a processive, ATP-dependent zinc metallopeptidase for both cytoplasmic and membrane proteins. Plays a role in the quality control of integral membrane proteins. This Slackia heliotrinireducens (strain ATCC 29202 / DSM 20476 / NCTC 11029 / RHS 1) (Peptococcus heliotrinreducens) protein is ATP-dependent zinc metalloprotease FtsH.